The following is a 172-amino-acid chain: Small ribosomal subunit protein uS5 (172 aa).

The S5 DRBM domain occupies 17 to 80 (LREKMISVNR…EQARRNMFKV (64 aa)).

Belongs to the universal ribosomal protein uS5 family. In terms of assembly, part of the 30S ribosomal subunit. Contacts proteins S4 and S8.

Functionally, with S4 and S12 plays an important role in translational accuracy. Located at the back of the 30S subunit body where it stabilizes the conformation of the head with respect to the body. The chain is Small ribosomal subunit protein uS5 from Burkholderia orbicola (strain AU 1054).